The chain runs to 365 residues: MNILKISKQTLRNNIKIIREYIGNAKMCFPVKANAYGHGIEDIVENTHDLVDFFAVANSLEAFRVTAVAKNPVLVFGVIYYEYIEKMISENIRVSIQDYEDIEKLEQIAKELDKKVYAHININTGMNRMGVDYNDACRTIQRAYESDWLILEGVYSHLACADNRDHPTNIKQKNRFDSIVKFTKGLSQDIICHLSNSYGFLGQKGICYDMVRPGILSYGFLPEFYVDRVIREIKPIARLLSKVVKIITLQEGEGVGYSLIYRGFEGEQLAVIPIGYGDGFPRELGDRGFVNINDVMYPMAGRMSMDSLTVSLGINEYDVKVGDTVELISAIPRNRNSAFSIAKQTNTIEYDIMSTLNDRIIRKII.

Lys32 serves as the catalytic Proton acceptor; specific for D-alanine. An N6-(pyridoxal phosphate)lysine modification is found at Lys32. Arg128 contacts substrate. Residue Tyr257 is the Proton acceptor; specific for L-alanine of the active site. Met305 is a substrate binding site.

Belongs to the alanine racemase family. The cofactor is pyridoxal 5'-phosphate.

It carries out the reaction L-alanine = D-alanine. It functions in the pathway amino-acid biosynthesis; D-alanine biosynthesis; D-alanine from L-alanine: step 1/1. Functionally, catalyzes the interconversion of L-alanine and D-alanine. May also act on other amino acids. This Francisella tularensis subsp. tularensis (strain WY96-3418) protein is Alanine racemase (alr).